Here is a 310-residue protein sequence, read N- to C-terminus: Malate dehydrogenase (310 aa).

NAD(+) is bound by residues 7 to 13 (GAAGGIG) and aspartate 34. The substrate site is built by arginine 81 and arginine 87. Residues asparagine 94 and 117-119 (ITN) contribute to the NAD(+) site. The substrate site is built by asparagine 119 and arginine 153. Histidine 177 functions as the Proton acceptor in the catalytic mechanism. An NAD(+)-binding site is contributed by methionine 227.

This sequence belongs to the LDH/MDH superfamily. MDH type 1 family. Homodimer.

It catalyses the reaction (S)-malate + NAD(+) = oxaloacetate + NADH + H(+). Catalyzes the reversible oxidation of malate to oxaloacetate. This chain is Malate dehydrogenase, found in Pseudoalteromonas translucida (strain TAC 125).